Here is a 135-residue protein sequence, read N- to C-terminus: ATP synthase epsilon chain (135 aa).

The protein belongs to the ATPase epsilon chain family. In terms of assembly, F-type ATPases have 2 components, CF(1) - the catalytic core - and CF(0) - the membrane proton channel. CF(1) has five subunits: alpha(3), beta(3), gamma(1), delta(1), epsilon(1). CF(0) has three main subunits: a, b and c.

It is found in the cell inner membrane. In terms of biological role, produces ATP from ADP in the presence of a proton gradient across the membrane. The sequence is that of ATP synthase epsilon chain from Desulforapulum autotrophicum (strain ATCC 43914 / DSM 3382 / VKM B-1955 / HRM2) (Desulfobacterium autotrophicum).